The following is a 599-amino-acid chain: DNA-directed RNA polymerase III subunit RPC3 (599 aa).

Positions 350-375 are disordered; that stretch reads PKKRSASNGDDERPTKKIKTEDSDDI. Over residues 359 to 370 the composition is skewed to basic and acidic residues; that stretch reads DDERPTKKIKTE. Residues 528–549 are leucine-zipper; sequence LIFSMAEILSNIQAFREDHKIL.

It belongs to the RNA polymerase beta chain family. In terms of assembly, component of the RNA polymerase III (Pol III) complex consisting of 17 subunits.

Its subcellular location is the nucleus. DNA-dependent RNA polymerase catalyzes the transcription of DNA into RNA using the four ribonucleoside triphosphates as substrates. Specific core component of RNA polymerase III which synthesizes small RNAs, such as 5S rRNA and tRNAs. This Scheffersomyces stipitis (strain ATCC 58785 / CBS 6054 / NBRC 10063 / NRRL Y-11545) (Yeast) protein is DNA-directed RNA polymerase III subunit RPC3 (RPC82).